The following is an 83-amino-acid chain: MTINFDNATLILEAEGLRCPEPVMMVRKTIRQMADGDTLLIKADDPSTTRDIPSFCRFMDHELIAEDTETLPFRFLIRKGLSA.

Cys19 acts as the Cysteine persulfide intermediate in catalysis.

The protein belongs to the sulfur carrier protein TusA family.

The protein resides in the cytoplasm. Functionally, sulfur carrier protein which probably makes part of a sulfur-relay system. The protein is Sulfur carrier protein TusA of Aliivibrio salmonicida (strain LFI1238) (Vibrio salmonicida (strain LFI1238)).